A 481-amino-acid polypeptide reads, in one-letter code: Cardiolipin synthase A (481 aa).

Helical transmembrane passes span 10–30 and 40–60; these read FFGY…LHAL and IAWA…YLIF. 2 consecutive PLD phosphodiesterase domains span residues 220–247 and 394–421; these read VNFR…GDEY and QPGF…DNRS. Residues H225, K227, D232, H399, K401, and D406 contribute to the active site.

Belongs to the phospholipase D family. Cardiolipin synthase subfamily. ClsA sub-subfamily.

Its subcellular location is the cell inner membrane. The enzyme catalyses 2 a 1,2-diacyl-sn-glycero-3-phospho-(1'-sn-glycerol) = a cardiolipin + glycerol. Functionally, catalyzes the reversible phosphatidyl group transfer from one phosphatidylglycerol molecule to another to form cardiolipin (CL) (diphosphatidylglycerol) and glycerol. The protein is Cardiolipin synthase A of Pseudomonas putida (Arthrobacter siderocapsulatus).